The chain runs to 172 residues: Mesogenin-1 (172 aa).

A disordered region spans residues Met1–Gln69. A compositionally biased stretch (polar residues) spans Ser18 to Ala29. Over residues Ser42 to Ser66 the composition is skewed to low complexity. The 55-residue stretch at Gln108–Leu162 folds into the bHLH domain.

It localises to the nucleus. Involved in specifying the paraxial, but not dorsal, mesoderm. May regulate the expression of T-box transcription factors required for mesoderm formation and differentiation, such as brachyury T, wnt8, vegt and eomes. The polypeptide is Mesogenin-1 (msgn1) (Xenopus tropicalis (Western clawed frog)).